The primary structure comprises 1347 residues: Spermatogenesis-associated protein 31A3 (1347 aa).

Residues 23-43 (PWVLDIFLTLVFALGFFFLLL) form a helical membrane-spanning segment. 8 disordered regions span residues 55-87 (PSPSPGKRKCPVGRRRRPRGRMKNHSLRAGREC), 108-142 (HLDKGDFGQLSGPDPPGEVGERAPDGASQSSHEPM), 154-235 (SPDP…STLI), 373-397 (EQDTTNPKPFWNMGENSKQLPGPQK), 627-658 (QDESPGTSQAKGKPSPWQSSMSTGESSKEAQK), 900-955 (RGIP…REAV), 1084-1161 (VHEE…PSVS), and 1313-1335 (KAVSPVSPPQHWPKTSGASSHHH). Residues 60-82 (GKRKCPVGRRRRPRGRMKNHSLR) show a composition bias toward basic residues. Positions 165–178 (LASTPSPGPMTTSV) are enriched in polar residues. Pro residues predominate over residues 198 to 211 (PEPPALFPHPPHTP). 2 stretches are compositionally biased toward polar residues: residues 627–651 (QDESPGTSQAKGKPSPWQSSMSTGE) and 927–948 (LTYSLTGSTQQSRSLGAQSSKA). Basic and acidic residues-rich tracts occupy residues 1108–1127 (HKSEKFRKPNLEKHEERLEG) and 1137–1146 (RKTEDTHQDE).

This sequence belongs to the SPATA31 family.

Its subcellular location is the membrane. May play a role in spermatogenesis. The chain is Spermatogenesis-associated protein 31A3 (SPATA31A3) from Homo sapiens (Human).